Reading from the N-terminus, the 204-residue chain is Linker for activation of T-cells family member 2 (204 aa).

Topologically, residues 1–7 are extracellular; that stretch reads MNAELEL. Residues 8-28 traverse the membrane as a helical; Signal-anchor for type III membrane protein segment; it reads LWPLSGLLLLLLLGTTAWLCV. 2 S-palmitoyl cysteine lipidation sites follow: C27 and C30. Over 29–204 the chain is Cytoplasmic; the sequence is QCSRPGVKRN…NGDVATTEKI (176 aa). Position 60 is a phosphotyrosine (Y60). 2 positions are modified to phosphoserine: S61 and S96. Y140, Y161, and Y193 each carry phosphotyrosine. Residues 147-204 form a disordered region; it reads KPSTPESGTEESEDYQNSVSILQWRESKRTMGARTSPSGSPDEEPDYVNGDVATTEKI.

In terms of assembly, when phosphorylated, interacts with GRB2. May also interact with SOS1, GAB1 and CBL. In terms of processing, phosphorylated on tyrosines following cross-linking of BCR in B-cells, high affinity IgG receptor (FCGR1) in myeloid cells, or high affinity IgE receptor (FCER1) in mast cells; which induces the recruitment of GRB2.

The protein localises to the cell membrane. Its function is as follows. Involved in FCER1 (high affinity immunoglobulin epsilon receptor)-mediated signaling in mast cells. May also be involved in BCR (B-cell antigen receptor)-mediated signaling in B-cells and FCGR1 (high affinity immunoglobulin gamma Fc receptor I)-mediated signaling in myeloid cells. Couples activation of these receptors and their associated kinases with distal intracellular events through the recruitment of GRB2. The protein is Linker for activation of T-cells family member 2 (Lat2) of Rattus norvegicus (Rat).